Consider the following 206-residue polypeptide: Ribosomal RNA small subunit methyltransferase G (206 aa).

S-adenosyl-L-methionine is bound by residues Gly73, Leu78, 124-125 (VE), and Arg139.

Belongs to the methyltransferase superfamily. RNA methyltransferase RsmG family.

Its subcellular location is the cytoplasm. The catalysed reaction is guanosine(527) in 16S rRNA + S-adenosyl-L-methionine = N(7)-methylguanosine(527) in 16S rRNA + S-adenosyl-L-homocysteine. Specifically methylates the N7 position of guanine in position 527 of 16S rRNA. The chain is Ribosomal RNA small subunit methyltransferase G from Yersinia pseudotuberculosis serotype O:1b (strain IP 31758).